Here is a 20-residue protein sequence, read N- to C-terminus: Basic phospholipase A2 cannitoxin alpha chain (20 aa).

In terms of assembly, heterotrimer of alpha, beta, and gamma chains; non-covalently linked. Ca(2+) serves as cofactor. In terms of tissue distribution, expressed by the venom gland.

It localises to the secreted. The enzyme catalyses a 1,2-diacyl-sn-glycero-3-phosphocholine + H2O = a 1-acyl-sn-glycero-3-phosphocholine + a fatty acid + H(+). Functionally, heterotrimer: Snake venom phospholipase A2 (PLA2) heterotrimer that acts as a potent presynaptic neurotoxin by blocking synaptic transmission and synaptic vesicle recycling. Enzymatic activity is essential for the neurotoxic effects. May act by binding in a calcium-dependent fashion to neurotonal pentraxin-1 (NPTX1) and neurotonal pentraxin-2 (NPTX2), but not to neuronal pentraxin receptor (NPTXR). Also binds to taipoxin-associated calcium binding protein 49 (RCN2), a protein localized in the lumen of endoplasmic reticulum. In terms of biological role, monomer (alpha chain): Snake venom phospholipase A2 (PLA2) that possesses a low level of presynaptic activity and the same high enzymatic activity than the heterotrimer. PLA2 catalyzes the calcium-dependent hydrolysis of the 2-acyl groups in 3-sn-phosphoglycerides. The sequence is that of Basic phospholipase A2 cannitoxin alpha chain from Oxyuranus scutellatus canni (Papuan taipan).